Consider the following 76-residue polypeptide: Protein krueppel (76 aa).

2 C2H2-type zinc fingers span residues 11 to 33 (FECS…LRLH) and 39 to 61 (YSCP…LRVH).

It belongs to the krueppel C2H2-type zinc-finger protein family.

The protein localises to the nucleus. Krueppel is a gap class segmentation protein. This chain is Protein krueppel (Kr), found in Manduca sexta (Tobacco hawkmoth).